The following is a 752-amino-acid chain: Photosystem I P700 chlorophyll a apoprotein A1 (752 aa).

The next 8 helical transmembrane spans lie at Ile73–Ala96, Leu159–His182, Met198–Leu222, Ile294–Tyr312, Trp349–Tyr372, Leu388–Val414, Ala436–His458, and Phe533–Leu551. [4Fe-4S] cluster contacts are provided by Cys575 and Cys584. Helical transmembrane passes span His591–Trp612 and Ser666–Phe688. His677 is a binding site for chlorophyll a'. 2 residues coordinate chlorophyll a: Met685 and Tyr693. A phylloquinone-binding site is contributed by Trp694. The helical transmembrane segment at Ala726–Ala746 threads the bilayer.

The protein belongs to the PsaA/PsaB family. In terms of assembly, the PsaA/B heterodimer binds the P700 chlorophyll special pair and subsequent electron acceptors. PSI consists of a core antenna complex that captures photons, and an electron transfer chain that converts photonic excitation into a charge separation. The eukaryotic PSI reaction center is composed of at least 11 subunits. The cofactor is P700 is a chlorophyll a/chlorophyll a' dimer, A0 is one or more chlorophyll a, A1 is one or both phylloquinones and FX is a shared 4Fe-4S iron-sulfur center..

Its subcellular location is the plastid. It is found in the chloroplast thylakoid membrane. It catalyses the reaction reduced [plastocyanin] + hnu + oxidized [2Fe-2S]-[ferredoxin] = oxidized [plastocyanin] + reduced [2Fe-2S]-[ferredoxin]. PsaA and PsaB bind P700, the primary electron donor of photosystem I (PSI), as well as the electron acceptors A0, A1 and FX. PSI is a plastocyanin/cytochrome c6-ferredoxin oxidoreductase, converting photonic excitation into a charge separation, which transfers an electron from the donor P700 chlorophyll pair to the spectroscopically characterized acceptors A0, A1, FX, FA and FB in turn. Oxidized P700 is reduced on the lumenal side of the thylakoid membrane by plastocyanin or cytochrome c6. The chain is Photosystem I P700 chlorophyll a apoprotein A1 from Thalassiosira pseudonana (Marine diatom).